A 196-amino-acid chain; its full sequence is uncharacterized protein (196 aa).

A helical transmembrane segment spans residues 22-42 (MIIIPMALLVFILIIGSFFAI).

Its subcellular location is the cell membrane. This is an uncharacterized protein from Lactobacillus acidophilus (strain ATCC 700396 / NCK56 / N2 / NCFM).